Here is a 429-residue protein sequence, read N- to C-terminus: Glutamate-1-semialdehyde 2,1-aminomutase (429 aa).

At K265 the chain carries N6-(pyridoxal phosphate)lysine.

It belongs to the class-III pyridoxal-phosphate-dependent aminotransferase family. HemL subfamily. In terms of assembly, homodimer. The cofactor is pyridoxal 5'-phosphate.

It localises to the cytoplasm. The enzyme catalyses (S)-4-amino-5-oxopentanoate = 5-aminolevulinate. The protein operates within porphyrin-containing compound metabolism; protoporphyrin-IX biosynthesis; 5-aminolevulinate from L-glutamyl-tRNA(Glu): step 2/2. This is Glutamate-1-semialdehyde 2,1-aminomutase from Legionella pneumophila subsp. pneumophila (strain Philadelphia 1 / ATCC 33152 / DSM 7513).